Here is a 147-residue protein sequence, read N- to C-terminus: Putative pre-16S rRNA nuclease (147 aa).

It belongs to the YqgF nuclease family.

It localises to the cytoplasm. In terms of biological role, could be a nuclease involved in processing of the 5'-end of pre-16S rRNA. This chain is Putative pre-16S rRNA nuclease, found in Limosilactobacillus reuteri (strain DSM 20016) (Lactobacillus reuteri).